A 162-amino-acid polypeptide reads, in one-letter code: ATP synthase subunit b (162 aa).

Residues 6–25 (TLFTLVTFLVLMLAVGKVAW) traverse the membrane as a helical segment.

The protein belongs to the ATPase B chain family. In terms of assembly, F-type ATPases have 2 components, F(1) - the catalytic core - and F(0) - the membrane proton channel. F(1) has five subunits: alpha(3), beta(3), gamma(1), delta(1), epsilon(1). F(0) has three main subunits: a(1), b(2) and c(10-14). The alpha and beta chains form an alternating ring which encloses part of the gamma chain. F(1) is attached to F(0) by a central stalk formed by the gamma and epsilon chains, while a peripheral stalk is formed by the delta and b chains.

The protein resides in the cell membrane. Its function is as follows. F(1)F(0) ATP synthase produces ATP from ADP in the presence of a proton or sodium gradient. F-type ATPases consist of two structural domains, F(1) containing the extramembraneous catalytic core and F(0) containing the membrane proton channel, linked together by a central stalk and a peripheral stalk. During catalysis, ATP synthesis in the catalytic domain of F(1) is coupled via a rotary mechanism of the central stalk subunits to proton translocation. In terms of biological role, component of the F(0) channel, it forms part of the peripheral stalk, linking F(1) to F(0). The sequence is that of ATP synthase subunit b from Lacticaseibacillus paracasei (strain ATCC 334 / BCRC 17002 / CCUG 31169 / CIP 107868 / KCTC 3260 / NRRL B-441) (Lactobacillus paracasei).